We begin with the raw amino-acid sequence, 102 residues long: Small ribosomal subunit protein bS6 (102 aa).

Belongs to the bacterial ribosomal protein bS6 family.

Its function is as follows. Binds together with bS18 to 16S ribosomal RNA. This chain is Small ribosomal subunit protein bS6, found in Solidesulfovibrio magneticus (strain ATCC 700980 / DSM 13731 / RS-1) (Desulfovibrio magneticus).